The sequence spans 514 residues: 2,3-bisphosphoglycerate-independent phosphoglycerate mutase (514 aa).

Positions 14 and 64 each coordinate Mn(2+). Catalysis depends on Ser64, which acts as the Phosphoserine intermediate. Residues His125, 155–156 (RD), Arg187, Arg193, 263–266 (RADR), and Lys336 each bind substrate. 5 residues coordinate Mn(2+): Asp403, His407, Asp444, His445, and His463.

It belongs to the BPG-independent phosphoglycerate mutase family. Monomer. Requires Mn(2+) as cofactor.

It catalyses the reaction (2R)-2-phosphoglycerate = (2R)-3-phosphoglycerate. Its pathway is carbohydrate degradation; glycolysis; pyruvate from D-glyceraldehyde 3-phosphate: step 3/5. Functionally, catalyzes the interconversion of 2-phosphoglycerate and 3-phosphoglycerate. This is 2,3-bisphosphoglycerate-independent phosphoglycerate mutase from Shewanella denitrificans (strain OS217 / ATCC BAA-1090 / DSM 15013).